The following is a 373-amino-acid chain: 4-hydroxy-3-methylbut-2-en-1-yl diphosphate synthase (flavodoxin) (373 aa).

[4Fe-4S] cluster is bound by residues cysteine 270, cysteine 273, cysteine 305, and glutamate 312.

It belongs to the IspG family. The cofactor is [4Fe-4S] cluster.

The enzyme catalyses (2E)-4-hydroxy-3-methylbut-2-enyl diphosphate + oxidized [flavodoxin] + H2O + 2 H(+) = 2-C-methyl-D-erythritol 2,4-cyclic diphosphate + reduced [flavodoxin]. The protein operates within isoprenoid biosynthesis; isopentenyl diphosphate biosynthesis via DXP pathway; isopentenyl diphosphate from 1-deoxy-D-xylulose 5-phosphate: step 5/6. Its function is as follows. Converts 2C-methyl-D-erythritol 2,4-cyclodiphosphate (ME-2,4cPP) into 1-hydroxy-2-methyl-2-(E)-butenyl 4-diphosphate. The polypeptide is 4-hydroxy-3-methylbut-2-en-1-yl diphosphate synthase (flavodoxin) (Proteus mirabilis (strain HI4320)).